The sequence spans 325 residues: Glutarate 2-hydroxylase (325 aa).

3 residues coordinate Fe cation: His160, Asp162, and His292.

The protein belongs to the glutarate hydroxylase family. In terms of assembly, homotetramer. Requires Fe(2+) as cofactor.

It catalyses the reaction glutarate + 2-oxoglutarate + O2 = (S)-2-hydroxyglutarate + succinate + CO2. It functions in the pathway amino-acid degradation. In terms of biological role, acts as an alpha-ketoglutarate-dependent dioxygenase catalyzing hydroxylation of glutarate (GA) to L-2-hydroxyglutarate (L2HG). Functions in a L-lysine degradation pathway that proceeds via cadaverine, glutarate and L-2-hydroxyglutarate. The polypeptide is Glutarate 2-hydroxylase (Pseudomonas putida (strain ATCC 700007 / DSM 6899 / JCM 31910 / BCRC 17059 / LMG 24140 / F1)).